The chain runs to 297 residues: N-acetylmuramic acid 6-phosphate etherase (297 aa).

In terms of domain architecture, SIS spans 55–218; it reads AAAALKSGGR…STGAMVKFGK (164 aa). Glu-83 functions as the Proton donor in the catalytic mechanism. The active site involves Glu-114.

Belongs to the GCKR-like family. MurNAc-6-P etherase subfamily. In terms of assembly, homodimer.

The catalysed reaction is N-acetyl-D-muramate 6-phosphate + H2O = N-acetyl-D-glucosamine 6-phosphate + (R)-lactate. It functions in the pathway amino-sugar metabolism; 1,6-anhydro-N-acetylmuramate degradation. Its pathway is amino-sugar metabolism; N-acetylmuramate degradation. The protein operates within cell wall biogenesis; peptidoglycan recycling. Functionally, specifically catalyzes the cleavage of the D-lactyl ether substituent of MurNAc 6-phosphate, producing GlcNAc 6-phosphate and D-lactate. Together with AnmK, is also required for the utilization of anhydro-N-acetylmuramic acid (anhMurNAc) either imported from the medium or derived from its own cell wall murein, and thus plays a role in cell wall recycling. This Salmonella paratyphi B (strain ATCC BAA-1250 / SPB7) protein is N-acetylmuramic acid 6-phosphate etherase.